Consider the following 683-residue polypeptide: Methionine--tRNA ligase (683 aa).

A 'HIGH' region motif is present at residues 15-25; sequence YYPSGKLHIGN. A 'KMSKS' region motif is present at residues 311–315; it reads KMSKS. Lys-314 is an ATP binding site. Residues 581–683 enclose the tRNA-binding domain; it reads DFDKVELKVA…DNMVNGSLIS (103 aa).

The protein belongs to the class-I aminoacyl-tRNA synthetase family. MetG type 2B subfamily. As to quaternary structure, homodimer.

The protein localises to the cytoplasm. The catalysed reaction is tRNA(Met) + L-methionine + ATP = L-methionyl-tRNA(Met) + AMP + diphosphate. Functionally, is required not only for elongation of protein synthesis but also for the initiation of all mRNA translation through initiator tRNA(fMet) aminoacylation. The polypeptide is Methionine--tRNA ligase (Lactiplantibacillus plantarum (strain ATCC BAA-793 / NCIMB 8826 / WCFS1) (Lactobacillus plantarum)).